A 424-amino-acid polypeptide reads, in one-letter code: Adenylosuccinate synthetase 1 (424 aa).

Residues 12–18 (GDEGKGK) and 40–42 (GHT) each bind GTP. Aspartate 13 functions as the Proton acceptor in the catalytic mechanism. 2 residues coordinate Mg(2+): aspartate 13 and glycine 40. Residues 13 to 16 (DEGK), 38 to 41 (NAGH), threonine 127, arginine 141, threonine 236, and arginine 304 each bind IMP. Histidine 41 functions as the Proton donor in the catalytic mechanism. 300–306 (ARTGRPR) is a binding site for substrate. GTP is bound by residues arginine 306, 332-334 (KLD), and 413-415 (GVG).

It belongs to the adenylosuccinate synthetase family. As to quaternary structure, homodimer. The cofactor is Mg(2+).

The protein resides in the cytoplasm. It catalyses the reaction IMP + L-aspartate + GTP = N(6)-(1,2-dicarboxyethyl)-AMP + GDP + phosphate + 2 H(+). Its pathway is purine metabolism; AMP biosynthesis via de novo pathway; AMP from IMP: step 1/2. Plays an important role in the de novo pathway of purine nucleotide biosynthesis. Catalyzes the first committed step in the biosynthesis of AMP from IMP. This Methanosarcina acetivorans (strain ATCC 35395 / DSM 2834 / JCM 12185 / C2A) protein is Adenylosuccinate synthetase 1.